Reading from the N-terminus, the 176-residue chain is 2-C-methyl-D-erythritol 2,4-cyclodiphosphate synthase (176 aa).

Aspartate 23, histidine 25, and histidine 60 together coordinate a divalent metal cation. Residue 23–25 participates in 4-CDP-2-C-methyl-D-erythritol 2-phosphate binding; the sequence is DSH. 149 to 152 contacts 4-CDP-2-C-methyl-D-erythritol 2-phosphate; that stretch reads TSGE.

The protein belongs to the IspF family. In terms of assembly, homotrimer. A divalent metal cation serves as cofactor.

The enzyme catalyses 4-CDP-2-C-methyl-D-erythritol 2-phosphate = 2-C-methyl-D-erythritol 2,4-cyclic diphosphate + CMP. The protein operates within isoprenoid biosynthesis; isopentenyl diphosphate biosynthesis via DXP pathway; isopentenyl diphosphate from 1-deoxy-D-xylulose 5-phosphate: step 4/6. In terms of biological role, involved in the biosynthesis of isopentenyl diphosphate (IPP) and dimethylallyl diphosphate (DMAPP), two major building blocks of isoprenoid compounds. Catalyzes the conversion of 4-diphosphocytidyl-2-C-methyl-D-erythritol 2-phosphate (CDP-ME2P) to 2-C-methyl-D-erythritol 2,4-cyclodiphosphate (ME-CPP) with a corresponding release of cytidine 5-monophosphate (CMP). This is 2-C-methyl-D-erythritol 2,4-cyclodiphosphate synthase from Chlamydia felis (strain Fe/C-56) (Chlamydophila felis).